The chain runs to 483 residues: Threonine synthase-like 2 (483 aa).

Lysine 113 is subject to N6-(pyridoxal phosphate)lysine.

Belongs to the threonine synthase family. The cofactor is pyridoxal 5'-phosphate.

Functionally, acts as a catabolic phospho-lyase on both gamma- and beta-phosphorylated substrates. Degrades O-phospho-threonine (PThr) to alpha-ketobutyrate, ammonia and phosphate. Also degrades O-phospho-homoserine (PHS), but this is not its physiological substrate. The sequence is that of Threonine synthase-like 2 (Thnsl2) from Mus musculus (Mouse).